A 107-amino-acid chain; its full sequence is MEVTSFILNATFKEFACFGNNYLIILPGIMLERNVFRHLNYSTNSICSHYQFFGGHYESFELLVVIVYYFSHVGSFSLAEIYRITWDKRIVLYGTTTTLVYCSEGSD.

A helical transmembrane segment spans residues 62-79; it reads LLVVIVYYFSHVGSFSLA.

It is found in the nucleus membrane. This is an uncharacterized protein from Schizosaccharomyces pombe (strain 972 / ATCC 24843) (Fission yeast).